We begin with the raw amino-acid sequence, 580 residues long: uncharacterized protein (580 aa).

Disordered stretches follow at residues 161–241 (SFSP…SVND), 256–281 (LGSL…SFSD), 325–345 (NVSH…QLLK), 472–495 (PRDT…DNSD), and 544–564 (SAVL…KEVR). Positions 192-203 (SNSNSSDTSTDD) are enriched in low complexity. Polar residues-rich tracts occupy residues 223-241 (THSS…SVND) and 256-269 (LGSL…TAQK). Residues 326–341 (VSHEEKSHSVQDDKSK) show a composition bias toward basic and acidic residues. The segment covering 481–495 (PNLSQSGNINSDNSD) has biased composition (polar residues).

This is an uncharacterized protein from Schizosaccharomyces pombe (strain 972 / ATCC 24843) (Fission yeast).